Here is a 110-residue protein sequence, read N- to C-terminus: MEVRALLKTVRVSSKKASLVANLFRHQSTANAISILKNTNKKSAPIFLKILNSAISNAVNNHGLDASKLYVSNVMVNEGPTLKRFQPHSQGRATRILKRTSHLSVMVSER.

It belongs to the universal ribosomal protein uL22 family. As to quaternary structure, part of the 50S ribosomal subunit.

Functionally, this protein binds specifically to 23S rRNA; its binding is stimulated by other ribosomal proteins, e.g. L4, L17, and L20. It is important during the early stages of 50S assembly. It makes multiple contacts with different domains of the 23S rRNA in the assembled 50S subunit and ribosome. In terms of biological role, the globular domain of the protein is located near the polypeptide exit tunnel on the outside of the subunit, while an extended beta-hairpin is found that lines the wall of the exit tunnel in the center of the 70S ribosome. The sequence is that of Large ribosomal subunit protein uL22 from Mycoplasmopsis pulmonis (strain UAB CTIP) (Mycoplasma pulmonis).